The sequence spans 58 residues: Large ribosomal subunit protein uL30 (58 aa).

This sequence belongs to the universal ribosomal protein uL30 family. In terms of assembly, part of the 50S ribosomal subunit.

This Trichlorobacter lovleyi (strain ATCC BAA-1151 / DSM 17278 / SZ) (Geobacter lovleyi) protein is Large ribosomal subunit protein uL30.